Consider the following 69-residue polypeptide: Iota-conotoxin LtIIIA (69 aa).

The signal sequence occupies residues 1–20; the sequence is MLKMGVLLFTFLVLFPLTTL. Residues 21 to 52 constitute a propeptide that is removed on maturation; that stretch reads ELDTDRPVERHAAIKQDLKPQERRGIRLHAPR. 2 positions are modified to 4-carboxyglutamate: Glu54 and Glu57. 3 disulfide bridges follow: Cys55–Cys67, Cys56–Cys65, and Cys61–Cys68. At Pro58 the chain carries 4-hydroxyproline.

In terms of tissue distribution, expressed by the venom duct.

It localises to the secreted. Functionally, iota-conotoxins bind to voltage-gated sodium channels and act as agonists by shifting the voltage-dependence of activation to more hyperpolarized levels. This toxin enhances tetrodotoxin-sensitive sodium current in rat dorsal root ganglion neurons. In Conus litteratus (Lettered cone), this protein is Iota-conotoxin LtIIIA.